We begin with the raw amino-acid sequence, 182 residues long: Core-binding factor subunit beta (182 aa).

Ala173 is modified (phosphoserine).

The protein belongs to the CBF-beta family. Heterodimer with RUNX1, RUNX2 and RUNX3. Interacts with COPRS. Found in a complex with PRMT5 and RUNX1. As to quaternary structure, (Microbial infection) Interacts with HIV-1 Vif; forming an active cullin-5-RING E3 ubiquitin-protein ligase complex (ECS complex).

Its subcellular location is the nucleus. Its function is as follows. Forms the heterodimeric complex core-binding factor (CBF) with RUNX family proteins (RUNX1, RUNX2, and RUNX3). RUNX members modulate the transcription of their target genes through recognizing the core consensus binding sequence 5'-TGTGGT-3', or very rarely, 5'-TGCGGT-3', within their regulatory regions via their runt domain, while CBFB is a non-DNA-binding regulatory subunit that allosterically enhances the sequence-specific DNA-binding capacity of RUNX. The heterodimers bind to the core site of a number of enhancers and promoters, including murine leukemia virus, polyomavirus enhancer, T-cell receptor enhancers, LCK, IL3 and GM-CSF promoters. CBF complexes repress ZBTB7B transcription factor during cytotoxic (CD8+) T cell development. They bind to RUNX-binding sequence within the ZBTB7B locus acting as transcriptional silencer and allowing for cytotoxic T cell differentiation. (Microbial infection) Following infection, hijacked by the HIV-1 Vif protein, leading to the formation a cullin-5-RING E3 ubiquitin-protein ligase complex (ECS complex) that catalyzes ubiquitination and degradation of APOBEC3F and APOBEC3G. The complex can also ubiquitinate APOBEC3H to some extent. Association with HIV-1 Vif protein also inhibits the transcription coactivator activity of CBFB/CBF-beta. The sequence is that of Core-binding factor subunit beta (CBFB) from Homo sapiens (Human).